The primary structure comprises 273 residues: HMP-PP phosphatase (273 aa).

Asp-8 (nucleophile) is an active-site residue. Asp-8, Asp-10, and Asp-212 together coordinate Mg(2+).

It belongs to the HAD-like hydrolase superfamily. Cof family. Mg(2+) is required as a cofactor.

The catalysed reaction is 4-amino-2-methyl-5-(diphosphooxymethyl)pyrimidine + H2O = 4-amino-2-methyl-5-(phosphooxymethyl)pyrimidine + phosphate + H(+). Catalyzes the hydrolysis of 4-amino-2-methyl-5-hydroxymethylpyrimidine pyrophosphate (HMP-PP) to 4-amino-2-methyl-5-hydroxymethylpyrimidine phosphate (HMP-P). This chain is HMP-PP phosphatase, found in Yersinia pseudotuberculosis serotype IB (strain PB1/+).